The following is a 148-amino-acid chain: MKVIFLKDVKGKGKKGEIKNVPDGYANNFLLKQGLAAEANNSNMKTLEAQKRKEEKEAAAELENAKKLKETLEKLTVELKAKSGEGGRLFGSITSKQIVDELQKTHKIKLDKRKFEMEDAIRSLGYTNVTVKLHPQVTATVKVHVSEQ.

It belongs to the bacterial ribosomal protein bL9 family.

Functionally, binds to the 23S rRNA. The protein is Large ribosomal subunit protein bL9 of Bacillus cytotoxicus (strain DSM 22905 / CIP 110041 / 391-98 / NVH 391-98).